We begin with the raw amino-acid sequence, 303 residues long: UDP-N-acetylenolpyruvoylglucosamine reductase (303 aa).

The 168-residue stretch at 29 to 196 (KIGGPADVLV…LEAVLQLEQK (168 aa)) folds into the FAD-binding PCMH-type domain. R174 is a catalytic residue. The active-site Proton donor is S225. The active site involves E295.

It belongs to the MurB family. Requires FAD as cofactor.

The protein resides in the cytoplasm. It catalyses the reaction UDP-N-acetyl-alpha-D-muramate + NADP(+) = UDP-N-acetyl-3-O-(1-carboxyvinyl)-alpha-D-glucosamine + NADPH + H(+). It functions in the pathway cell wall biogenesis; peptidoglycan biosynthesis. In terms of biological role, cell wall formation. The polypeptide is UDP-N-acetylenolpyruvoylglucosamine reductase (Bacillus licheniformis (strain ATCC 14580 / DSM 13 / JCM 2505 / CCUG 7422 / NBRC 12200 / NCIMB 9375 / NCTC 10341 / NRRL NRS-1264 / Gibson 46)).